The sequence spans 451 residues: Chromosomal replication initiator protein DnaA (451 aa).

The domain I, interacts with DnaA modulators stretch occupies residues 1-71 (MSEKEIWDKV…QAIIYDVIGY (71 aa)). The segment at 71 to 112 (YEVKPHFISEDELASYNNVNTQEVQEPQVQHSSIDDKTWGKE) is domain II. A domain III, AAA+ region region spans residues 113–329 (QFNMHNTFDT…GALTRLLAYS (217 aa)). Residues Gly-157, Gly-159, Lys-160, and Thr-161 each contribute to the ATP site. The domain IV, binds dsDNA stretch occupies residues 330–451 (KLQGKPITTE…ENLEKEIRNQ (122 aa)).

Belongs to the DnaA family. As to quaternary structure, oligomerizes as a right-handed, spiral filament on DNA at oriC.

The protein localises to the cytoplasm. Its function is as follows. Plays an essential role in the initiation and regulation of chromosomal replication. ATP-DnaA binds to the origin of replication (oriC) to initiate formation of the DNA replication initiation complex once per cell cycle. Binds the DnaA box (a 9 base pair repeat at the origin) and separates the double-stranded (ds)DNA. Forms a right-handed helical filament on oriC DNA; dsDNA binds to the exterior of the filament while single-stranded (ss)DNA is stabiized in the filament's interior. The ATP-DnaA-oriC complex binds and stabilizes one strand of the AT-rich DNA unwinding element (DUE), permitting loading of DNA polymerase. After initiation quickly degrades to an ADP-DnaA complex that is not apt for DNA replication. Binds acidic phospholipids. In Staphylococcus epidermidis (strain ATCC 12228 / FDA PCI 1200), this protein is Chromosomal replication initiator protein DnaA.